Consider the following 30-residue polypeptide: MKYDSLADLVVQAEKQNVPLXXLIXKDQAE.

It belongs to the iron-sulfur dependent L-serine dehydratase family. As to quaternary structure, heterodimer of an alpha chain and a beta chain. [4Fe-4S] cluster is required as a cofactor.

It carries out the reaction L-serine = pyruvate + NH4(+). It participates in carbohydrate biosynthesis; gluconeogenesis. The polypeptide is L-serine dehydratase, alpha chain (Anaerotignum propionicum (Clostridium propionicum)).